The primary structure comprises 262 residues: MNKIHVTYKNLLLPITFIAATLISACDNDKDAMAEAEKNQEKYMQKIQQKEHQQSMFFYDKAEMQKAIANINAKGGANLAIIEVRFFKGGYSFIRQSVNTPAKVEVFKFNNGYWGGPSPVNLTIFGTITEEQKQEALKEALFKFDSINFSIIPERIQETIKRANASGIISVTEDSDIVVRAEIAHNGEFVYDITITAKNTARAVMTLNKDGSIAGYEIKEPFDPKKEAEKAQQLVEQSRKDIESQRKKAAGKMNEIQQTFKK.

A signal peptide spans Met1–Ala25. Cys26 carries the N-palmitoyl cysteine lipid modification. A lipid anchor (S-diacylglycerol cysteine) is attached at Cys26. A disordered region spans residues Glu227–Lys262. Over residues Gln237–Arg246 the composition is skewed to basic and acidic residues.

The protein resides in the cell membrane. The chain is Probable lipoprotein EnvF (envF) from Salmonella typhimurium (strain LT2 / SGSC1412 / ATCC 700720).